A 373-amino-acid polypeptide reads, in one-letter code: Cobalt-precorrin-5B C(1)-methyltransferase (373 aa).

It belongs to the CbiD family.

It catalyses the reaction Co-precorrin-5B + S-adenosyl-L-methionine = Co-precorrin-6A + S-adenosyl-L-homocysteine. It functions in the pathway cofactor biosynthesis; adenosylcobalamin biosynthesis; cob(II)yrinate a,c-diamide from sirohydrochlorin (anaerobic route): step 6/10. In terms of biological role, catalyzes the methylation of C-1 in cobalt-precorrin-5B to form cobalt-precorrin-6A. This chain is Cobalt-precorrin-5B C(1)-methyltransferase, found in Listeria monocytogenes serovar 1/2a (strain ATCC BAA-679 / EGD-e).